The sequence spans 421 residues: UDP-N-acetylglucosamine 1-carboxyvinyltransferase 2 (421 aa).

22 to 23 (KN) is a binding site for phosphoenolpyruvate. Arginine 94 is a binding site for UDP-N-acetyl-alpha-D-glucosamine. Cysteine 118 (proton donor) is an active-site residue. At cysteine 118 the chain carries 2-(S-cysteinyl)pyruvic acid O-phosphothioketal. Residues aspartate 308 and isoleucine 330 each coordinate UDP-N-acetyl-alpha-D-glucosamine.

It belongs to the EPSP synthase family. MurA subfamily.

The protein localises to the cytoplasm. The catalysed reaction is phosphoenolpyruvate + UDP-N-acetyl-alpha-D-glucosamine = UDP-N-acetyl-3-O-(1-carboxyvinyl)-alpha-D-glucosamine + phosphate. Its pathway is cell wall biogenesis; peptidoglycan biosynthesis. Cell wall formation. Adds enolpyruvyl to UDP-N-acetylglucosamine. This Lactococcus lactis subsp. lactis (strain IL1403) (Streptococcus lactis) protein is UDP-N-acetylglucosamine 1-carboxyvinyltransferase 2.